The following is a 377-amino-acid chain: Acetylornithine aminotransferase (377 aa).

Pyridoxal 5'-phosphate is bound by residues 94 to 95 and F121; that span reads GT. A N(2)-acetyl-L-ornithine-binding site is contributed by R124. Residue 206-209 participates in pyridoxal 5'-phosphate binding; it reads DEIQ. Residue K235 is modified to N6-(pyridoxal phosphate)lysine. Position 263 (S263) interacts with N(2)-acetyl-L-ornithine. Pyridoxal 5'-phosphate is bound at residue T264.

The protein belongs to the class-III pyridoxal-phosphate-dependent aminotransferase family. ArgD subfamily. In terms of assembly, homodimer. Pyridoxal 5'-phosphate is required as a cofactor.

The protein localises to the cytoplasm. It catalyses the reaction N(2)-acetyl-L-ornithine + 2-oxoglutarate = N-acetyl-L-glutamate 5-semialdehyde + L-glutamate. Its pathway is amino-acid biosynthesis; L-arginine biosynthesis; N(2)-acetyl-L-ornithine from L-glutamate: step 4/4. This chain is Acetylornithine aminotransferase, found in Lactococcus lactis subsp. lactis (strain IL1403) (Streptococcus lactis).